A 347-amino-acid polypeptide reads, in one-letter code: Syntaxin-32 (347 aa).

The Cytoplasmic portion of the chain corresponds to 1–325 (MSARHGQSSY…RYLNSISSNR (325 aa)). 2 disordered regions span residues 172-191 (HESR…TNPF) and 208-251 (PLPW…QQMV). 2 stretches are compositionally biased toward polar residues: residues 177-191 (QLFS…TNPF) and 213-222 (NGSSSSSSQL). The span at 237–249 (QQSQQQQQQQQQQ) shows a compositional bias: low complexity. Residues 255-317 (DTYMQGRAEA…EGAQSQLARY (63 aa)) form the t-SNARE coiled-coil homology domain. The helical; Anchor for type IV membrane protein transmembrane segment at 326 to 346 (WLMMKIFFVLIAFLMIFLFFV) threads the bilayer. A347 is a topological domain (vesicular).

The protein belongs to the syntaxin family. As to quaternary structure, part of the t-SNARE complex.

The protein resides in the golgi apparatus. The protein localises to the cis-Golgi network membrane. Functionally, vesicle trafficking protein that functions in the secretory pathway. This chain is Syntaxin-32 (SYP32), found in Arabidopsis thaliana (Mouse-ear cress).